The chain runs to 798 residues: MATDDKVAILTDDEEEQKRKYVLADPFNGISREPEPPSNETPSPSESAAIPEEETDWIEKHCVKINNDLLISKVFYFFFYSAYGSLYPLLPVYYKQLGMSPSQSGLLVGIRYFIEFCSAPFWGVVADRFKKGKVVLLFSLLCWVLFNLGIGFVKPATLRCVPKIPPTARPTNSSHPFTILPANSSIVPSITTSTRTREKRNLPPYDGLEMLVSEPNVTETVIFSTAPNKTSAPTLQPQTDEITDRVMDLTSHPSTAPSTPPGNTTRETTTSLVTTTKSLPSDQVTLVYDQQEVEAIFLVILVVVIIGEFFSASSVTIVDTVTLQYLGKHRDRYGLQRMWGSLGWGLAMLSVGIGIDYTHIDVLIDGKGCKPPEYRNYQIVFIVFGVLMTMALIVATQFRFRYNHFKNGENKGKEVEIPQVERNSSTECSEETPTTTSHSQAFNFWDLIRLLCSVQYGSVLFVAWFMGFGYGFVFTFLYWHLEDLNGTTTLFGVCSVLSHVSELTAYFFSHKLIELIGHIRVLYIGLACNTARYIYISYLENAWTVLPMEVLQGVTHAAIWAACISYLSAAVPPELRTSAQGILQGLHLGLGRGCGAMIGGVLVNYFGAAATFRGIGMACLVILLLFALIQWLAVPDEEEDKTMLAERIPVPSSPVPIATIDLVQQQTEDVMPRIEPRLPPKKTKHQEEQEDVNKPAWGVSSSPWVTFVYALYQIKEMMQLTRDNRASEIQPLQGTSENRESPPAGGGTLPGPCETHSDPSRNQPSPQAAAASQTQSSPARPRVEESEDQQAQPAAGGH.

Thr11 is modified (phosphothreonine). The interval 25–50 (DPFNGISREPEPPSNETPSPSESAAI) is disordered. Positions 38-50 (SNETPSPSESAAI) are enriched in low complexity. 12 helical membrane-spanning segments follow: residues 74–94 (VFYF…PVYY), 106–126 (LLVG…GVVA), 133–153 (KVVL…IGFV), 295–315 (AIFL…ASSV), 344–364 (WGLA…DVLI), 378–398 (QIVF…ATQF), 459–479 (VLFV…FLYW), 488–508 (TTLF…AYFF), 516–536 (IGHI…YIYI), 553–573 (GVTH…AVPP), 588–608 (LGLG…YFGA), and 614–634 (GIGM…WLAV). 2 disordered regions span residues 671 to 696 (MPRI…NKPA) and 732 to 798 (LQGT…AGGH). Low complexity predominate over residues 760–780 (SRNQPSPQAAAASQTQSSPAR).

The protein belongs to the major facilitator superfamily. MFSD6 family.

The protein resides in the membrane. The protein is Major facilitator superfamily domain-containing protein 6 (MFSD6) of Sus scrofa (Pig).